The primary structure comprises 128 residues: Modulator protein MzrA (128 aa).

At 1–11 (MMVMKRPSLRQ) the chain is on the cytoplasmic side. Residues 12–32 (FSWLLGGSLLLGALFWLWLAV) form a helical membrane-spanning segment. Over 33-128 (QQQEATLAIR…RLRDAPHRLG (96 aa)) the chain is Periplasmic.

This sequence belongs to the MzrA family. In terms of assembly, interacts with EnvZ.

The protein resides in the cell inner membrane. In terms of biological role, modulates the activity of the EnvZ/OmpR two-component regulatory system, probably by directly modulating EnvZ enzymatic activity and increasing stability of phosphorylated OmpR. This chain is Modulator protein MzrA, found in Klebsiella pneumoniae subsp. pneumoniae (strain ATCC 700721 / MGH 78578).